The sequence spans 318 residues: Ankyrin repeat domain-containing protein 1 (318 aa).

Residues 37-77 (ALEKQEDLKTTSKSLIELEEEKQSKEKQLKSELLKKKLEER) adopt a coiled-coil conformation. ANK repeat units follow at residues 151 to 180 (YKRT…NIEF), 184 to 213 (LEST…AINA), 217 to 246 (LLST…DLNA), 250 to 279 (EGDT…NLNI), and 283 to 314 (AGKT…KNSH).

It is found in the nucleus. Functionally, may act as a nuclear transcription factor that negatively regulates the expression of cardiac genes. The sequence is that of Ankyrin repeat domain-containing protein 1 (ankrd1) from Xenopus laevis (African clawed frog).